The following is a 565-amino-acid chain: Arginine--tRNA ligase (565 aa).

Residues 128-138 (ANPTGPLHVGH) carry the 'HIGH' region motif.

This sequence belongs to the class-I aminoacyl-tRNA synthetase family. Monomer.

The protein localises to the cytoplasm. It carries out the reaction tRNA(Arg) + L-arginine + ATP = L-arginyl-tRNA(Arg) + AMP + diphosphate. This is Arginine--tRNA ligase from Albidiferax ferrireducens (strain ATCC BAA-621 / DSM 15236 / T118) (Rhodoferax ferrireducens).